A 209-amino-acid chain; its full sequence is Large ribosomal subunit protein uL1 (209 aa).

It belongs to the universal ribosomal protein uL1 family. In terms of assembly, part of the 50S ribosomal subunit.

Functionally, binds directly to 23S rRNA. The L1 stalk is quite mobile in the ribosome, and is involved in E site tRNA release. Its function is as follows. Protein L1 is also a translational repressor protein, it controls the translation of the L11 operon by binding to its mRNA. This chain is Large ribosomal subunit protein uL1 (rplA), found in Neorickettsia sennetsu (strain ATCC VR-367 / Miyayama) (Ehrlichia sennetsu).